Consider the following 240-residue polypeptide: Ribonuclease PH (240 aa).

Residues arginine 87 and 125 to 127 contribute to the phosphate site; that span reads GTR.

It belongs to the RNase PH family. Homohexameric ring arranged as a trimer of dimers.

The enzyme catalyses tRNA(n+1) + phosphate = tRNA(n) + a ribonucleoside 5'-diphosphate. In terms of biological role, phosphorolytic 3'-5' exoribonuclease that plays an important role in tRNA 3'-end maturation. Removes nucleotide residues following the 3'-CCA terminus of tRNAs; can also add nucleotides to the ends of RNA molecules by using nucleoside diphosphates as substrates, but this may not be physiologically important. Probably plays a role in initiation of 16S rRNA degradation (leading to ribosome degradation) during starvation. The protein is Ribonuclease PH of Pseudomonas syringae pv. syringae (strain B728a).